A 420-amino-acid chain; its full sequence is Gamma-glutamyl phosphate reductase (420 aa).

The protein belongs to the gamma-glutamyl phosphate reductase family.

It localises to the cytoplasm. The catalysed reaction is L-glutamate 5-semialdehyde + phosphate + NADP(+) = L-glutamyl 5-phosphate + NADPH + H(+). The protein operates within amino-acid biosynthesis; L-proline biosynthesis; L-glutamate 5-semialdehyde from L-glutamate: step 2/2. Functionally, catalyzes the NADPH-dependent reduction of L-glutamate 5-phosphate into L-glutamate 5-semialdehyde and phosphate. The product spontaneously undergoes cyclization to form 1-pyrroline-5-carboxylate. This is Gamma-glutamyl phosphate reductase from Neisseria meningitidis serogroup B (strain ATCC BAA-335 / MC58).